Consider the following 305-residue polypeptide: Tyrosine recombinase XerC (305 aa).

Residues 2 to 88 (TNKQRLVHLF…ALRSFYKFLL (87 aa)) form the Core-binding (CB) domain. A Tyr recombinase domain is found at 109–295 (RIPSFLYEEE…SKDSLRKTYM (187 aa)). Catalysis depends on residues Arg-149, Lys-173, His-247, Arg-250, and His-273. The active-site O-(3'-phospho-DNA)-tyrosine intermediate is the Tyr-282.

It belongs to the 'phage' integrase family. XerC subfamily. As to quaternary structure, forms a cyclic heterotetrameric complex composed of two molecules of XerC and two molecules of XerD.

The protein resides in the cytoplasm. Functionally, site-specific tyrosine recombinase, which acts by catalyzing the cutting and rejoining of the recombining DNA molecules. The XerC-XerD complex is essential to convert dimers of the bacterial chromosome into monomers to permit their segregation at cell division. It also contributes to the segregational stability of plasmids. This Bacillus pumilus (strain SAFR-032) protein is Tyrosine recombinase XerC.